A 218-amino-acid chain; its full sequence is Claudin-5 (218 aa).

Residues 1-7 lie on the Cytoplasmic side of the membrane; sequence MGSAALE. Residues 8-28 traverse the membrane as a helical segment; the sequence is ILGLVLCLVGWGGLILACGLP. The Extracellular segment spans residues 29-81; sequence MWQVTAFLDHNIVTAQTTWKGLWMSCVVQSTGHMQCKVYDSVLALSTEVQAAR. The chain crosses the membrane as a helical span at residues 82-102; sequence ALTVSAVLLAFVALFVTLAGA. Residues 103–122 are Cytoplasmic-facing; the sequence is QCTTCVAPGPAKARVALTGG. The chain crosses the membrane as a helical span at residues 123-143; that stretch reads VLYLFCGLLALVPLCWFANIV. Residues 144–159 are Extracellular-facing; that stretch reads VREFYDPSVPVSQKYE. Residues 160 to 180 traverse the membrane as a helical segment; it reads LGAALYIGWAATALLMVGGCL. The Cytoplasmic portion of the chain corresponds to 181 to 218; that stretch reads LCCGAWVCTGRPDLSFPVKYSAPRRPTATGDYDKKNYV. The interactions with TJP1, TJP2 and TJP3 stretch occupies residues 217–218; that stretch reads YV.

It belongs to the claudin family. In terms of assembly, directly interacts with TJP1/ZO-1, TJP2/ZO-2 and TJP3/ZO-3. Interacts with MPDZ.

It is found in the cell junction. Its subcellular location is the tight junction. The protein localises to the cell membrane. Functionally, plays a major role in tight junction-specific obliteration of the intercellular space. The chain is Claudin-5 (CLDN5) from Homo sapiens (Human).